The primary structure comprises 429 residues: CBL-interacting serine/threonine-protein kinase 7 (429 aa).

The region spanning 25–280 (YELGRRLGSG…IETVMKTNWF (256 aa)) is the Protein kinase domain. ATP contacts are provided by residues 31 to 39 (LGSGSFAKV) and lysine 54. The Proton acceptor role is filled by aspartate 149. The segment at 167–195 (DFGLSALPEHLQNGLLHTACGTPAYTAPE) is activation loop. Residue serine 171 is modified to Phosphoserine. Residue threonine 184 is modified to Phosphothreonine. Residues 302-326 (SSVNSITAFDLISLSSGLDLSGLFE) form the NAF domain. Positions 330–363 (KKERRFTAKVSGVEVEEKAKMIGEKLGYVVKKKM) are PPI.

The protein belongs to the protein kinase superfamily. CAMK Ser/Thr protein kinase family. SNF1 subfamily. Interacts with CBL1, CBL2 and CBL3. Requires Mn(2+) as cofactor. In terms of processing, autophosphorylated. In terms of tissue distribution, strongly expressed in leaves, but barely expressed in roots, stems or flowers.

It carries out the reaction L-seryl-[protein] + ATP = O-phospho-L-seryl-[protein] + ADP + H(+). The catalysed reaction is L-threonyl-[protein] + ATP = O-phospho-L-threonyl-[protein] + ADP + H(+). Its function is as follows. CIPK serine-threonine protein kinases interact with CBL proteins. Binding of a CBL protein to the regulatory NAF domain of CIPK protein lead to the activation of the kinase in a calcium-dependent manner. Phosphorylates the rice sucrose synthase (SuSy) in vitro in an allosteric manner. Involved in cold response. The sequence is that of CBL-interacting serine/threonine-protein kinase 7 (CIPK7) from Arabidopsis thaliana (Mouse-ear cress).